A 315-amino-acid chain; its full sequence is MSITKAWNSSSVTMFILLGFTDHPELQALLFVTFLGIYLTTLAWNLALIFLIRGDTHLHTPMYFFLSNLSFIDICYSSAVAPNMLTDFFWEQKTISFVGCAAQFFFFVGMGLSECLLLTAMAYDRYAAISSPLLYPTIMTQGLCTRMVVGAYVGGFLSSLIQASSIFRLHFCGPNIINHFFCDLPPVLALSCSDTFLSQVVNFLVVVTVGGTSFLQLLISYGYIVSAVLKIPSAEGRWKACNTCASHLMVVTLLFGTALFVYLRPSSSYLLGRDKVVSVFYSLVIPMLNPLIYSLRNKEIKDALWKVLERKKVFS.

The Extracellular portion of the chain corresponds to 1–28 (MSITKAWNSSSVTMFILLGFTDHPELQA). A glycan (N-linked (GlcNAc...) asparagine) is linked at N8. The chain crosses the membrane as a helical span at residues 29–52 (LLFVTFLGIYLTTLAWNLALIFLI). Residues 53–60 (RGDTHLHT) are Cytoplasmic-facing. The chain crosses the membrane as a helical span at residues 61 to 82 (PMYFFLSNLSFIDICYSSAVAP). Topologically, residues 83–103 (NMLTDFFWEQKTISFVGCAAQ) are extracellular. A disulfide bond links C100 and C192. Residues 104–123 (FFFFVGMGLSECLLLTAMAY) form a helical membrane-spanning segment. At 124 to 142 (DRYAAISSPLLYPTIMTQG) the chain is on the cytoplasmic side. Residues 143-161 (LCTRMVVGAYVGGFLSSLI) form a helical membrane-spanning segment. The Extracellular portion of the chain corresponds to 162–198 (QASSIFRLHFCGPNIINHFFCDLPPVLALSCSDTFLS). A helical transmembrane segment spans residues 199–222 (QVVNFLVVVTVGGTSFLQLLISYG). Residues 223 to 239 (YIVSAVLKIPSAEGRWK) lie on the Cytoplasmic side of the membrane. Residues 240-262 (ACNTCASHLMVVTLLFGTALFVY) traverse the membrane as a helical segment. Over 263 to 275 (LRPSSSYLLGRDK) the chain is Extracellular. A helical membrane pass occupies residues 276–295 (VVSVFYSLVIPMLNPLIYSL). Residues 296-315 (RNKEIKDALWKVLERKKVFS) lie on the Cytoplasmic side of the membrane.

Belongs to the G-protein coupled receptor 1 family.

Its subcellular location is the cell membrane. Its function is as follows. Odorant receptor. The sequence is that of Olfactory receptor 5A1 (OR5A1) from Homo sapiens (Human).